The sequence spans 331 residues: MKILAYCVRPDEIDSFKNFSEKYGHTVDLIPDSFGPSVAHLAKGYDGISILGNDTCNREALEKIKDCGIKYLATRTAGVNNIDFDAAKEFGINVANVPAYSPNSVSEFTVGLALSLTRKIPFALKRVELNNFALGGLIGVELRNLTLGVIGTGRIGLKVIEGFSGFGMKKMIGYDIFENEKAKEYIEYKSLDEVYKEADIITLHAPLTDDNYHMIGKESIAKMKDGVFIINAARGALIDSEALIEGLKSGKIAGAALDSYEYEQGVFHNNKMNEIMKDDTLARLKSFPNVVITPHLGFYTDEAVSNMVEITLMNLQEFELKGTCKNQRVCK.

NAD(+)-binding positions include 154–155, D175, 205–206, N211, 232–234, and D258; these read RI, AP, and AAR. R234 is a catalytic residue. The active site involves E263. The active-site Proton donor is H295.

Belongs to the D-isomer specific 2-hydroxyacid dehydrogenase family.

The enzyme catalyses (R)-3-phenyllactate + NAD(+) = 3-phenylpyruvate + NADH + H(+). It catalyses the reaction (2R)-2-hydroxy-3-(4-hydroxyphenyl)propanoate + NAD(+) = 3-(4-hydroxyphenyl)pyruvate + NADH + H(+). It carries out the reaction 3-(indol-3-yl)lactate + NAD(+) = indole-3-pyruvate + NADH + H(+). Its pathway is amino-acid degradation. Its function is as follows. Essential for the reductive metabolism of L-phenylalanine, L-tyrosine and L-tryptophan. Catalyzes the conversion of phenylpyruvic acid to phenyllactic acid, 4-hydroxy-phenylpyruvic acid to 4-hydroxy-phenyllactic acid, and indolepyruvic acid to indolelactic acid. This Clostridium sporogenes (strain ATCC 7955 / DSM 767 / NBRC 16411 / NCIMB 8053 / NCTC 8594 / PA 3679) protein is Aromatic 2-oxoacid reductase.